The following is a 72-amino-acid chain: Heat-stable enterotoxin ST-IA/ST-P (72 aa).

An N-terminal signal peptide occupies residues 1–19 (MKKLMLAIFISVLSFPSFS). Positions 20–54 (QSTESLDSSKEKITLETKKCDVVKNNSEKKSENMN) are excised as a propeptide. 3 cysteine pairs are disulfide-bonded: cysteine 59–cysteine 64, cysteine 60–cysteine 68, and cysteine 63–cysteine 71.

It belongs to the heat-stable enterotoxin family.

The protein resides in the secreted. Functionally, toxin which activates the particulate form of guanylate cyclase and increases cyclic GMP levels within the host intestinal epithelial cells. The protein is Heat-stable enterotoxin ST-IA/ST-P (sta1) of Escherichia coli.